A 239-amino-acid chain; its full sequence is Outer membrane protein PagN (239 aa).

The first 22 residues, 1–22, serve as a signal peptide directing secretion; that stretch reads MKNFFAVCIIPLVVAWSATASA. Over 23 to 26 the chain is Periplasmic; that stretch reads KEGI. Residues 27 to 36 form a beta stranded membrane-spanning segment; it reads YITGKAGTSV. Topologically, residues 37-65 are extracellular; that stretch reads VNVYGINSTFSQDEIVNGHATLPDRTKGV. The chain crosses the membrane as a beta stranded span at residues 66 to 76; the sequence is FGGGVAIGYDF. Residues 77 to 81 are Periplasmic-facing; that stretch reads YDPFQ. Residues 82–92 form a beta stranded membrane-spanning segment; it reads LPVRLELDTTF. At 93–120 the chain is on the extracellular side; sequence RGETDAKGGQDIIAFGDPVHINVKNQVR. Residues 121–132 form a beta stranded membrane-spanning segment; that stretch reads MTTYMVNGYYDF. Topologically, residues 133-137 are periplasmic; that stretch reads HNSTA. Residues 138–148 traverse the membrane as a beta stranded segment; the sequence is FTPYISAGVGL. Residues 149–174 lie on the Extracellular side of the membrane; that stretch reads AHVKLSNNTIPVGFGINETLSASKNN. A beta stranded membrane pass occupies residues 175-185; it reads FAWGAGIGAKY. At 186–190 the chain is on the periplasmic side; the sequence is AVTDN. Residues 191–200 traverse the membrane as a beta stranded segment; sequence IMIDASYKYI. The Extracellular segment spans residues 201 to 230; that stretch reads NAGKVSISKNHYAGDEHTAYDADTKAASND. A beta stranded membrane pass occupies residues 231 to 239; sequence FMLGITYAF.

The protein resides in the cell outer membrane. In terms of biological role, haemagglutinin that facilitates the adhesion to and invasion of epithelial mammalian cells. Utilizes heparinated proteoglycan as a receptor to successfully invade host cells. The sequence is that of Outer membrane protein PagN (pagN) from Salmonella typhimurium (strain LT2 / SGSC1412 / ATCC 700720).